Reading from the N-terminus, the 161-residue chain is Ribosome maturation factor RimP (161 aa).

The protein belongs to the RimP family.

The protein resides in the cytoplasm. In terms of biological role, required for maturation of 30S ribosomal subunits. The chain is Ribosome maturation factor RimP from Rickettsia massiliae (strain Mtu5).